The following is an 89-amino-acid chain: Small ribosomal subunit protein uS15 (89 aa).

Belongs to the universal ribosomal protein uS15 family. In terms of assembly, part of the 30S ribosomal subunit. Forms a bridge to the 50S subunit in the 70S ribosome, contacting the 23S rRNA.

One of the primary rRNA binding proteins, it binds directly to 16S rRNA where it helps nucleate assembly of the platform of the 30S subunit by binding and bridging several RNA helices of the 16S rRNA. In terms of biological role, forms an intersubunit bridge (bridge B4) with the 23S rRNA of the 50S subunit in the ribosome. This is Small ribosomal subunit protein uS15 from Thiobacillus denitrificans (strain ATCC 25259 / T1).